Consider the following 476-residue polypeptide: ATP synthase subunit beta (476 aa).

ATP is bound at residue 158–165 (GGAGVGKT).

It belongs to the ATPase alpha/beta chains family. F-type ATPases have 2 components, CF(1) - the catalytic core - and CF(0) - the membrane proton channel. CF(1) has five subunits: alpha(3), beta(3), gamma(1), delta(1), epsilon(1). CF(0) has three main subunits: a(1), b(2) and c(9-12). The alpha and beta chains form an alternating ring which encloses part of the gamma chain. CF(1) is attached to CF(0) by a central stalk formed by the gamma and epsilon chains, while a peripheral stalk is formed by the delta and b chains.

It is found in the cell inner membrane. The catalysed reaction is ATP + H2O + 4 H(+)(in) = ADP + phosphate + 5 H(+)(out). Produces ATP from ADP in the presence of a proton gradient across the membrane. The catalytic sites are hosted primarily by the beta subunits. This Paracidovorax citrulli (strain AAC00-1) (Acidovorax citrulli) protein is ATP synthase subunit beta.